Reading from the N-terminus, the 476-residue chain is Ribosomal protein uS12 methylthiotransferase RimO (476 aa).

The 111-residue stretch at 33–143 folds into the MTTase N-terminal domain; it reads NRIGFVSLGC…VLKHVHKYVP (111 aa). [4Fe-4S] cluster contacts are provided by cysteine 42, cysteine 78, cysteine 107, cysteine 175, cysteine 179, and cysteine 182. The 238-residue stretch at 161-398 folds into the Radical SAM core domain; that stretch reads LTPKHYAYLK…MEVQAEISAE (238 aa). A TRAM domain is found at 401–467; the sequence is ARFVGRTMDI…EHDLWAELVD (67 aa).

The protein belongs to the methylthiotransferase family. RimO subfamily. It depends on [4Fe-4S] cluster as a cofactor.

The protein resides in the cytoplasm. It catalyses the reaction L-aspartate(89)-[ribosomal protein uS12]-hydrogen + (sulfur carrier)-SH + AH2 + 2 S-adenosyl-L-methionine = 3-methylsulfanyl-L-aspartate(89)-[ribosomal protein uS12]-hydrogen + (sulfur carrier)-H + 5'-deoxyadenosine + L-methionine + A + S-adenosyl-L-homocysteine + 2 H(+). Catalyzes the methylthiolation of an aspartic acid residue of ribosomal protein uS12. The polypeptide is Ribosomal protein uS12 methylthiotransferase RimO (Shewanella sp. (strain MR-4)).